The chain runs to 215 residues: ATP phosphoribosyltransferase (215 aa).

It belongs to the ATP phosphoribosyltransferase family. Short subfamily. In terms of assembly, heteromultimer composed of HisG and HisZ subunits.

Its subcellular location is the cytoplasm. It catalyses the reaction 1-(5-phospho-beta-D-ribosyl)-ATP + diphosphate = 5-phospho-alpha-D-ribose 1-diphosphate + ATP. The protein operates within amino-acid biosynthesis; L-histidine biosynthesis; L-histidine from 5-phospho-alpha-D-ribose 1-diphosphate: step 1/9. Functionally, catalyzes the condensation of ATP and 5-phosphoribose 1-diphosphate to form N'-(5'-phosphoribosyl)-ATP (PR-ATP). Has a crucial role in the pathway because the rate of histidine biosynthesis seems to be controlled primarily by regulation of HisG enzymatic activity. This Gloeothece citriformis (strain PCC 7424) (Cyanothece sp. (strain PCC 7424)) protein is ATP phosphoribosyltransferase.